We begin with the raw amino-acid sequence, 453 residues long: MLLLLPWLFSLLWIENAQAQLEDEGNFYSENVSRILDNLLEGYDNRLRPGFGGAVTEVKTDIYVTSFGPVSDVEMEYTMDVFFRQTWTDERLKFKGPAEILSLNNLMVSKIWTPDTFFRNGKKSIAHNMTTPNKLFRLMHNGTILYTMRLTINADCPMRLVNFPMDGHACPLKFGSYAYPKSEIIYTWKKGPLYSVEVPEESSSLLQYDLIGQTVSSETIKSNTGEYVIMTVYFHLQRKMGYFMIQIYTPCIMTVILSQVSFWINKESVPARTVFGITTVLTMTTLSISARHSLPKVSYATAMDWFIAVCFAFVFSALIEFAAVNYFTNLQSQKAERQAQTAAKPPVAKSKTTESLEAEIVVHSDSKYHLKKRISSLTLPIVPSSEASKVLSRTPILPSTPVTPPLLLPAIGGTSKIDQYSRILFPVAFAGFNLVYWIVYLSKDTMEVSSTVE.

The signal sequence occupies residues 1-19 (MLLLLPWLFSLLWIENAQA). Residues 20-243 (QLEDEGNFYS…FHLQRKMGYF (224 aa)) lie on the Extracellular side of the membrane. An N-linked (GlcNAc...) asparagine glycan is attached at asparagine 31. Position 84 (arginine 84) interacts with 4-aminobutanoate. 2 N-linked (GlcNAc...) asparagine glycosylation sites follow: asparagine 128 and asparagine 141. Threonine 147 serves as a coordination point for 4-aminobutanoate. Residues cysteine 156 and cysteine 170 are joined by a disulfide bond. Residues 244-264 (MIQIYTPCIMTVILSQVSFWI) form a helical membrane-spanning segment. The Cytoplasmic portion of the chain corresponds to 265–270 (NKESVP). A helical membrane pass occupies residues 271 to 290 (ARTVFGITTVLTMTTLSISA). Topologically, residues 291–304 (RHSLPKVSYATAMD) are extracellular. The chain crosses the membrane as a helical span at residues 305–325 (WFIAVCFAFVFSALIEFAAVN). Residues 326-422 (YFTNLQSQKA…GTSKIDQYSR (97 aa)) lie on the Cytoplasmic side of the membrane. Position 375 is a phosphoserine (serine 375). Threonine 403 bears the Phosphothreonine mark. Residues 423-443 (ILFPVAFAGFNLVYWIVYLSK) traverse the membrane as a helical segment. Over 444–453 (DTMEVSSTVE) the chain is Extracellular.

It belongs to the ligand-gated ion channel (TC 1.A.9) family. Gamma-aminobutyric acid receptor (TC 1.A.9.5) subfamily. GABRA6 sub-subfamily. Heteropentamer, formed by a combination of alpha (GABRA1-6), beta (GABRB1-3), gamma (GABRG1-3), delta (GABRD), epsilon (GABRE), rho (GABRR1-3), pi (GABRP) and theta (GABRQ) chains, each subunit exhibiting distinct physiological and pharmacological properties. Binds UBQLN1. In terms of tissue distribution, expressed in brain, in cerebellar granule cells.

The protein localises to the postsynaptic cell membrane. It is found in the cell membrane. It carries out the reaction chloride(in) = chloride(out). In terms of biological role, alpha subunit of the heteropentameric ligand-gated chloride channel gated by gamma-aminobutyric acid (GABA), a major inhibitory neurotransmitter in the brain. GABA-gated chloride channels, also named GABA(A) receptors (GABAAR), consist of five subunits arranged around a central pore and contain GABA active binding site(s) located at the alpha and beta subunit interface(s). When activated by GABA, GABAARs selectively allow the flow of chloride anions across the cell membrane down their electrochemical gradient. Alpha-6/GABRA6 subunits are found at both synaptic and extrasynaptic sites. Chloride influx into the postsynaptic neuron following GABAAR opening decreases the neuron ability to generate a new action potential, thereby reducing nerve transmission. Extrasynaptic alpha-6-containing receptors contribute to the tonic GABAergic inhibition. Alpha-6 subunits are also present on glutamatergic synapses. This Rattus norvegicus (Rat) protein is Gamma-aminobutyric acid receptor subunit alpha-6.